Consider the following 114-residue polypeptide: Hydrogenase maturation factor HypA (114 aa).

His2 serves as a coordination point for Ni(2+). Residues Cys73, Cys76, Cys89, and Cys92 each coordinate Zn(2+).

This sequence belongs to the HypA/HybF family.

In terms of biological role, involved in the maturation of [NiFe] hydrogenases. Required for nickel insertion into the metal center of the hydrogenase. This chain is Hydrogenase maturation factor HypA, found in Psychromonas ingrahamii (strain DSM 17664 / CCUG 51855 / 37).